The primary structure comprises 565 residues: Probable serine/threonine-protein kinase abkA (565 aa).

Residues 44 to 77 (NNNNISLKDKFKDLKDLKDNLNEKKINNDNDDDD) adopt a coiled-coil conformation. A Protein kinase domain is found at 231-565 (LFQDDPIAAA…FKNIFYKNYK (335 aa)). Residues 237 to 245 (IAAASIGQV) and Lys259 contribute to the ATP site. Asp401 functions as the Proton acceptor in the catalytic mechanism.

This sequence belongs to the protein kinase superfamily. ADCK protein kinase family.

The sequence is that of Probable serine/threonine-protein kinase abkA (abkA) from Dictyostelium discoideum (Social amoeba).